A 392-amino-acid chain; its full sequence is ATP phosphoribosyltransferase regulatory subunit (392 aa).

It belongs to the class-II aminoacyl-tRNA synthetase family. HisZ subfamily. Heteromultimer composed of HisG and HisZ subunits.

It is found in the cytoplasm. It functions in the pathway amino-acid biosynthesis; L-histidine biosynthesis; L-histidine from 5-phospho-alpha-D-ribose 1-diphosphate: step 1/9. Required for the first step of histidine biosynthesis. May allow the feedback regulation of ATP phosphoribosyltransferase activity by histidine. The polypeptide is ATP phosphoribosyltransferase regulatory subunit (Gloeobacter violaceus (strain ATCC 29082 / PCC 7421)).